A 362-amino-acid polypeptide reads, in one-letter code: Histidinol-phosphate aminotransferase 2 (362 aa).

Lys-222 carries the N6-(pyridoxal phosphate)lysine modification.

This sequence belongs to the class-II pyridoxal-phosphate-dependent aminotransferase family. Histidinol-phosphate aminotransferase subfamily. In terms of assembly, homodimer. The cofactor is pyridoxal 5'-phosphate.

It catalyses the reaction L-histidinol phosphate + 2-oxoglutarate = 3-(imidazol-4-yl)-2-oxopropyl phosphate + L-glutamate. Its pathway is amino-acid biosynthesis; L-histidine biosynthesis; L-histidine from 5-phospho-alpha-D-ribose 1-diphosphate: step 7/9. The sequence is that of Histidinol-phosphate aminotransferase 2 from Carboxydothermus hydrogenoformans (strain ATCC BAA-161 / DSM 6008 / Z-2901).